The chain runs to 98 residues: Endoribonuclease antitoxin GhoS (98 aa).

As to quaternary structure, monomer. In terms of processing, unlike other TA antitoxins, this protein is stable.

Its function is as follows. Antitoxin component of a type V toxin-antitoxin (TA) system. Neutralizes the toxic effects of toxin GhoT by digesting ghoT transcripts in a sequence-specific manner. In concert with GhoT is involved in reducing cell growth during antibacterial stress. In Escherichia coli O157:H7, this protein is Endoribonuclease antitoxin GhoS.